The sequence spans 418 residues: NADH-quinone oxidoreductase subunit D (418 aa).

It belongs to the complex I 49 kDa subunit family. As to quaternary structure, NDH-1 is composed of 14 different subunits. Subunits NuoB, C, D, E, F, and G constitute the peripheral sector of the complex.

It is found in the cell inner membrane. The catalysed reaction is a quinone + NADH + 5 H(+)(in) = a quinol + NAD(+) + 4 H(+)(out). In terms of biological role, NDH-1 shuttles electrons from NADH, via FMN and iron-sulfur (Fe-S) centers, to quinones in the respiratory chain. The immediate electron acceptor for the enzyme in this species is believed to be ubiquinone. Couples the redox reaction to proton translocation (for every two electrons transferred, four hydrogen ions are translocated across the cytoplasmic membrane), and thus conserves the redox energy in a proton gradient. This Neisseria gonorrhoeae (strain ATCC 700825 / FA 1090) protein is NADH-quinone oxidoreductase subunit D.